A 1213-amino-acid chain; its full sequence is uncharacterized protein (1213 aa).

The region spanning alanine 289–glutamate 390 is the PH domain. Positions leucine 776 to arginine 945 constitute a VASt domain. 2 consecutive transmembrane segments (helical) span residues leucine 996–phenylalanine 1016 and phenylalanine 1025–glycine 1045.

It is found in the cytoplasm. Its subcellular location is the nucleus membrane. The protein resides in the cytoskeleton. It localises to the microtubule organizing center. The protein localises to the spindle pole body. This is an uncharacterized protein from Schizosaccharomyces pombe (strain 972 / ATCC 24843) (Fission yeast).